Reading from the N-terminus, the 151-residue chain is UPF0178 protein YaiI (151 aa).

It belongs to the UPF0178 family.

The sequence is that of UPF0178 protein YaiI from Salmonella agona (strain SL483).